A 260-amino-acid chain; its full sequence is Oxidoreductase macE (260 aa).

This sequence belongs to the oxidoreductase OpS7 family.

The protein operates within secondary metabolite biosynthesis; terpenoid biosynthesis. Functionally, oxidoreductase; part of the gene cluster that mediates the biosynthesis of macrophorins, isoprenoid epoxycyclohexenones containing cyclized drimane moieties. The first step of the pathway is the synthesis of 6-methylsalicylic acid (6-MSA) by the polyketide synthase macA. 6-MSA is then converted to m-cresol by the decarboxylase macB. The cytochrome P450 monooxygenase macC then catalyzes the oxidation of m-cresol to toluquinol. Epoxidation of toluquinol is then performed by the short chain dehydrogenase macD, with the help of macE, and a further prenylation by macG leads to 7-deacetoxyyanuthone A. The next step is the hydroxylation of C-22 of 7-deacetoxyyanuthone A by the cytochrome P450 monooxygenase macH to yield 22-deacetylyanuthone A. O-Mevalon transferase macI then attaches mevalon to the hydroxyl group of 22-deacetylyanuthone A to produce yanuthone E. The terpene cyclase macJ catalyzes the cyclization of 22-deacetylyanuthone A to macrophorin A. MacJ is also able to catalyze cyclization of yanuthone E and 7-deacetoxyyanuthone A to their corresponding macrophorins. The macJ products can be further modified by macH and macJ, as well as by the FAD-dependent monooxygenase macF, to produce additional macrophorins, including 4'-oxomacrophorin A, 4'-oxomacrophorin D and 4'-oxomacrophorin E. The chain is Oxidoreductase macE from Penicillium terrestre.